Reading from the N-terminus, the 228-residue chain is Geranylgeranylglyceryl phosphate synthase (228 aa).

Residue Lys11 participates in sn-glycerol 1-phosphate binding. Residues Asp13 and Thr39 each contribute to the Mg(2+) site. Sn-glycerol 1-phosphate is bound by residues 159–164 (YIEYSG), Gly189, and 209–210 (GN).

This sequence belongs to the GGGP/HepGP synthase family. Group I subfamily. The cofactor is Mg(2+).

It is found in the cytoplasm. The enzyme catalyses sn-glycerol 1-phosphate + (2E,6E,10E)-geranylgeranyl diphosphate = sn-3-O-(geranylgeranyl)glycerol 1-phosphate + diphosphate. Its pathway is membrane lipid metabolism; glycerophospholipid metabolism. Functionally, prenyltransferase that catalyzes the transfer of the geranylgeranyl moiety of geranylgeranyl diphosphate (GGPP) to the C3 hydroxyl of sn-glycerol-1-phosphate (G1P). This reaction is the first ether-bond-formation step in the biosynthesis of archaeal membrane lipids. This Methanoregula boonei (strain DSM 21154 / JCM 14090 / 6A8) protein is Geranylgeranylglyceryl phosphate synthase.